The chain runs to 310 residues: TLC domain-containing protein 2 (310 aa).

A run of 6 helical transmembrane segments spans residues 6–26, 40–60, 79–99, 117–137, 167–187, and 194–214; these read LLVA…LQLL, NIFV…VGLW, VLVA…LWNQ, CLST…SLLL, ASLA…SLWL, and LSLA…SISI. The region spanning 33–227 is the TLC domain; that stretch reads RDRWMWRNIF…IRILTKDILQ (195 aa).

This sequence belongs to the TLCD family.

Its subcellular location is the cell membrane. In terms of biological role, regulates the composition and fluidity of the plasma membrane. Inhibits the incorporation of membrane-fluidizing phospholipids containing omega-3 long-chain polyunsaturated fatty acids (LCPUFA) and thereby promotes membrane rigidity. Does not appear to have any effect on LCPUFA synthesis. The chain is TLC domain-containing protein 2 (Tlcd2) from Mus musculus (Mouse).